Here is a 332-residue protein sequence, read N- to C-terminus: L-lactate dehydrogenase A chain (332 aa).

NAD(+)-binding positions include 29–57 and arginine 99; that span reads GMVGMASAISVLLKDLCDELALVDVMEEK. Residues arginine 106, asparagine 138, and arginine 169 each contribute to the substrate site. NAD(+) is bound at residue asparagine 138. Histidine 193 acts as the Proton acceptor in catalysis. Threonine 248 is a substrate binding site.

It belongs to the LDH/MDH superfamily. LDH family. As to quaternary structure, homotetramer.

The protein resides in the cytoplasm. The catalysed reaction is (S)-lactate + NAD(+) = pyruvate + NADH + H(+). It participates in fermentation; pyruvate fermentation to lactate; (S)-lactate from pyruvate: step 1/1. Functionally, interconverts simultaneously and stereospecifically pyruvate and lactate with concomitant interconversion of NADH and NAD(+). In Lycodichthys dearborni (Antarctic eelpout), this protein is L-lactate dehydrogenase A chain (ldha).